The sequence spans 535 residues: CTP synthase (535 aa).

The interval 1–267 (MTKYIFVTGG…DSLVCSHLKL (267 aa)) is amidoligase domain. S13 is a CTP binding site. UTP is bound at residue S13. An ATP-binding site is contributed by 14–19 (SLGKGI). Y54 serves as a coordination point for L-glutamine. Position 71 (D71) interacts with ATP. Residues D71 and E141 each coordinate Mg(2+). Residues 148-150 (DIE), 188-193 (KTKPTQ), and K224 contribute to the CTP site. UTP is bound by residues 188–193 (KTKPTQ) and K224. The Glutamine amidotransferase type-1 domain maps to 292 to 534 (TIALVGKYVE…VHASLKTSEK (243 aa)). G354 serves as a coordination point for L-glutamine. The active-site Nucleophile; for glutamine hydrolysis is the C381. Residues 382-385 (LGMQ), E405, and R462 contribute to the L-glutamine site. Residues H507 and E509 contribute to the active site.

It belongs to the CTP synthase family. In terms of assembly, homotetramer.

The catalysed reaction is UTP + L-glutamine + ATP + H2O = CTP + L-glutamate + ADP + phosphate + 2 H(+). The enzyme catalyses L-glutamine + H2O = L-glutamate + NH4(+). It carries out the reaction UTP + NH4(+) + ATP = CTP + ADP + phosphate + 2 H(+). The protein operates within pyrimidine metabolism; CTP biosynthesis via de novo pathway; CTP from UDP: step 2/2. With respect to regulation, allosterically activated by GTP, when glutamine is the substrate; GTP has no effect on the reaction when ammonia is the substrate. The allosteric effector GTP functions by stabilizing the protein conformation that binds the tetrahedral intermediate(s) formed during glutamine hydrolysis. Inhibited by the product CTP, via allosteric rather than competitive inhibition. Catalyzes the ATP-dependent amination of UTP to CTP with either L-glutamine or ammonia as the source of nitrogen. Regulates intracellular CTP levels through interactions with the four ribonucleotide triphosphates. The polypeptide is CTP synthase (Bacillus licheniformis (strain ATCC 14580 / DSM 13 / JCM 2505 / CCUG 7422 / NBRC 12200 / NCIMB 9375 / NCTC 10341 / NRRL NRS-1264 / Gibson 46)).